An 845-amino-acid polypeptide reads, in one-letter code: Poly(A) RNA polymerase gld-4 (845 aa).

Residues 1–55 form a disordered region; it reads MNEDSRLSSSQQPSTSTPRSSIPSTMNSDEPNTCRRLSQSQEQPSTSRTCKSETP. Positions 7–25 are enriched in low complexity; it reads LSSSQQPSTSTPRSSIPST. The segment covering 26 to 49 has biased composition (polar residues); the sequence is MNSDEPNTCRRLSQSQEQPSTSRT. Mg(2+)-binding residues include aspartate 139 and aspartate 141. The PAP-associated domain occupies 276–335; the sequence is NLGHLLLRFLELYSLEFNFEEMGISPGQCCYIPKSASGARYGHKQAQPGNLALEDPLLTA. A compositionally biased stretch (basic and acidic residues) spans 482–506; sequence KSLEKMPACDDNKKEEELVATRETD. Disordered regions lie at residues 482–733 and 788–845; these read KSLE…SEEP and NALT…RLQR. Over residues 535–551 the composition is skewed to low complexity; that stretch reads TSTQSVNTSATVSTAAS. Composition is skewed to polar residues over residues 561–571 and 579–588; these read PGLSSSMGNQS and GINNRNNSAV. Residues 605-620 are compositionally biased toward basic and acidic residues; it reads RESKRTQTTSEDKMQD. Basic residues predominate over residues 643–653; the sequence is SHKHRNAHPQR. Composition is skewed to polar residues over residues 654 to 666, 695 to 732, 788 to 805, and 819 to 828; these read QRPS…QGSD, RQQT…SSEE, NALT…TSMQ, and DNNSATSSTD.

Interacts with gls-1 isoform C. Requires Mg(2+) as cofactor. Mn(2+) is required as a cofactor. Germline-specific.

The protein localises to the cytoplasm. Its subcellular location is the cytoplasmic granule. The protein resides in the perinuclear region. The enzyme catalyses RNA(n) + ATP = RNA(n)-3'-adenine ribonucleotide + diphosphate. Functionally, cytoplasmic poly(A) RNA polymerase that adds successive AMP monomers to the 3'-end of specific RNAs, forming a poly(A) tail. The enzymatic activity is enhanced by its interaction with gls-1. Required, together with gld-2, for early meiotic progression in male and female germ cells and for gld-1 protein accumulation in the hermaphrodite germline. In the germline, forms a complex with gls-1 which directly binds to gld-1 mRNA and prevents its degradation. In Caenorhabditis elegans, this protein is Poly(A) RNA polymerase gld-4.